The chain runs to 167 residues: uncharacterized protein (167 aa).

This sequence to A.aeolicus aq_328.

This is an uncharacterized protein from Aquifex aeolicus (strain VF5).